The chain runs to 534 residues: Lysophosphatidylcholine acyltransferase 1 (534 aa).

Positions Met-1–Ala-25 are disordered. Over Met-1–Arg-57 the chain is Cytoplasmic. A compositionally biased stretch (low complexity) spans Pro-8 to Gly-19. The chain crosses the membrane as a helical; Signal-anchor for type II membrane protein span at residues Leu-58–Gly-78. At Pro-79–Asp-534 the chain is on the lumenal side. Positions His-135–Asp-140 match the HXXXXD motif motif. 2 EF-hand domains span residues Pro-379–Pro-414 and Ile-451–Phe-486. Asp-392, Ser-394, Glu-398, and Glu-403 together coordinate Ca(2+). Residues Lys-531–Asp-534 carry the Di-lysine motif motif.

It belongs to the 1-acyl-sn-glycerol-3-phosphate acyltransferase family. In terms of tissue distribution, enriched in alveolar type II cells of lung. Also highly expressed in stomach.

Its subcellular location is the endoplasmic reticulum membrane. It localises to the golgi apparatus membrane. It is found in the cell membrane. The protein resides in the lipid droplet. The enzyme catalyses a 1-acyl-sn-glycero-3-phosphocholine + an acyl-CoA = a 1,2-diacyl-sn-glycero-3-phosphocholine + CoA. It carries out the reaction a 1-O-alkyl-sn-glycero-3-phosphocholine + acetyl-CoA = a 1-O-alkyl-2-acetyl-sn-glycero-3-phosphocholine + CoA. It catalyses the reaction a 1-acyl-sn-glycero-3-phosphate + an acyl-CoA = a 1,2-diacyl-sn-glycero-3-phosphate + CoA. The catalysed reaction is a 1-O-(1Z-alkenyl)-sn-glycero-3-phosphocholine + an acyl-CoA = a 1-O-(1Z-alkenyl)-2-acyl-sn-glycero-3-phosphocholine + CoA. The enzyme catalyses 1-acyl-sn-glycero-3-phospho-(1'-sn-glycerol) + an acyl-CoA = a 1,2-diacyl-sn-glycero-3-phospho-(1'-sn-glycerol) + CoA. It carries out the reaction a 1-acyl-sn-glycero-3-phosphocholine + hexadecanoyl-CoA = 1-acyl-2-hexadecanoyl-sn-glycero-3-phosphocholine + CoA. It catalyses the reaction a 1-acyl-sn-glycero-3-phosphate + hexadecanoyl-CoA = 1-acyl-2-hexadecanoyl-sn-glycero-3-phosphate + CoA. The catalysed reaction is 1-acyl-sn-glycero-3-phospho-(1'-sn-glycerol) + hexadecanoyl-CoA = 1-acyl-2-hexadecanoyl-sn-glycero-3-phospho-(1'-sn-glycerol) + CoA. The enzyme catalyses 1-hexadecanoyl-sn-glycero-3-phosphocholine + hexadecanoyl-CoA = 1,2-dihexadecanoyl-sn-glycero-3-phosphocholine + CoA. It carries out the reaction 1-O-hexadecyl-sn-glycero-3-phosphocholine + hexadecanoyl-CoA = 1-O-hexadecyl-2-hexadecanoyl-sn-glycero-3-phosphocholine + CoA. It catalyses the reaction a 1-O-(1Z-alkenyl)-sn-glycero-3-phosphocholine + hexadecanoyl-CoA = 1-O-(1Z)-alkenyl-2-hexadecanoyl-sn-glycero-3-phosphocholine + CoA. The catalysed reaction is 1-hexadecanoyl-sn-glycero-3-phospho-(1'-sn-glycerol) + hexadecanoyl-CoA = 1,2-dihexadecanoyl-sn-glycero-3-phospho-(1'-sn-glycerol) + CoA. The enzyme catalyses 1-dodecanoyl-sn-glycero-3-phosphocholine + hexadecanoyl-CoA = 1-dodecanoyl-2-hexadecanoyl-sn-glycero-3-phosphocholine + CoA. It carries out the reaction 1-tetradecanoyl-sn-glycero-3-phosphocholine + hexadecanoyl-CoA = 1-tetradecanoyl-2-hexadecanoyl-sn-glycero-3-phosphocholine + CoA. It catalyses the reaction 1-O-octadecyl-sn-glycero-3-phosphocholine + hexadecanoyl-CoA = 1-O-octadecyl-2-hexadecanoyl-sn-glycero-3-phosphocholine + CoA. The catalysed reaction is 1-octadecanoyl-sn-glycero-3-phosphocholine + hexadecanoyl-CoA = 1-octadecanoyl-2-hexadecanoyl-sn-glycero-3-phosphocholine + CoA. The enzyme catalyses 1-(9Z-octadecenoyl)-sn-glycero-3-phosphocholine + hexadecanoyl-CoA = 1-(9Z-octadecenoyl)-2-hexadecanoyl-sn-glycero-3-phosphocholine + CoA. It carries out the reaction 1-eicosanoyl-sn-glycero-3-phosphocholine + hexadecanoyl-CoA = 1-eicosanoyl-2-hexadecanoyl-sn-glycero-3-phosphocholine + CoA. It catalyses the reaction hexanoyl-CoA + 1-hexadecanoyl-sn-glycero-3-phosphocholine = 1-hexadecanoyl-2-hexanoyl-sn-glycero-3-phosphocholine + CoA. The catalysed reaction is octanoyl-CoA + 1-hexadecanoyl-sn-glycero-3-phosphocholine = 1-hexadecanoyl-2-octanoyl-sn-glycero-3-phosphocholine + CoA. The enzyme catalyses decanoyl-CoA + 1-hexadecanoyl-sn-glycero-3-phosphocholine = 1-hexadecanoyl-2-decanoyl-sn-glycero-3-phosphocholine + CoA. It carries out the reaction dodecanoyl-CoA + 1-hexadecanoyl-sn-glycero-3-phosphocholine = 1-hexadecanoyl-2-dodecanoyl-sn-glycero-3-phosphocholine + CoA. It catalyses the reaction tetradecanoyl-CoA + 1-hexadecanoyl-sn-glycero-3-phosphocholine = 1-hexadecanoyl-2-tetradecanoyl-sn-glycero-3-phosphocholine + CoA. The catalysed reaction is 1-hexadecanoyl-sn-glycero-3-phosphocholine + (9Z)-octadecenoyl-CoA = 1-hexadecanoyl-2-(9Z-octadecenoyl)-sn-glycero-3-phosphocholine + CoA. The enzyme catalyses (9Z,12Z)-octadecadienoyl-CoA + 1-hexadecanoyl-sn-glycero-3-phosphocholine = 1-hexadecanoyl-2-(9Z,12Z-octadecadienoyl)-sn-glycero-3-phosphocholine + CoA. It carries out the reaction (4Z,7Z,10Z,13Z,16Z,19Z)-docosahexaenoyl-CoA + 1-hexadecanoyl-sn-glycero-3-phosphocholine = 1-hexadecanoyl-2-(4Z,7Z,10Z,13Z,16Z,19Z-docosahexaenoyl)-sn-glycero-3-phosphocholine + CoA. It catalyses the reaction 1-hexadecanoyl-sn-glycero-3-phosphocholine + acetyl-CoA = 1-hexadecanoyl-2-acetyl-sn-glycero-3-phosphocholine + CoA. The catalysed reaction is eicosanoyl-CoA + 1-hexadecanoyl-sn-glycero-3-phosphocholine = 1-hexadecanoyl-2-eicosanoyl-sn-glycero-3-phosphocholine + CoA. The enzyme catalyses 1-O-hexadecyl-sn-glycero-3-phosphocholine + acetyl-CoA = 1-O-hexadecyl-2-acetyl-sn-glycero-3-phosphocholine + CoA. It participates in lipid metabolism; phospholipid metabolism. Its activity is regulated as follows. Activity is stimulated by Mg(2+) or Mn(2+). Its function is as follows. Exhibits acyltransferase activity. Exhibits acetyltransferase activity. Activity is calcium-independent. Catalyzes the conversion of lysophosphatidylcholine (1-acyl-sn-glycero-3-phosphocholine or LPC) into phosphatidylcholine (1,2-diacyl-sn-glycero-3-phosphocholine or PC). Catalyzes the conversion 1-acyl-sn-glycerol-3-phosphate (lysophosphatidic acid or LPA) into 1,2-diacyl-sn-glycerol-3-phosphate (phosphatidic acid or PA) by incorporating an acyl moiety at the sn-2 position of the glycerol backbone. Displays a clear preference for saturated fatty acyl-CoAs, and 1-myristoyl or 1-palmitoyl LPC as acyl donors and acceptors, respectively. Involved in platelet-activating factor (PAF) biosynthesis by catalyzing the conversion of the PAF precursor, 1-O-alkyl-sn-glycero-3-phosphocholine (lyso-PAF) into 1-O-alkyl-2-acetyl-sn-glycero-3-phosphocholine (PAF). May synthesize phosphatidylcholine in pulmonary surfactant, thereby playing a pivotal role in respiratory physiology. Involved in the regulation of lipid droplet number and size. The sequence is that of Lysophosphatidylcholine acyltransferase 1 (Lpcat1) from Rattus norvegicus (Rat).